A 232-amino-acid polypeptide reads, in one-letter code: Oxidoreductase 1 (232 aa).

This sequence belongs to the MQO family. FAD is required as a cofactor.

Its function is as follows. Oxidoreductase; part of the gene cluster that mediates the biosynthesis of elsinochromes, pigments consisting of at least four interconvertible tautomers (A, B, C and D) that have a core phenolic quinone to which various side chains are attached and which play an important role in fungal pathogenesis. The non-reducing polyketide synthase PKS1 was proposed to iteratively catalyze decarboxylation between acetyl-CoA and malonyl-CoA subunits for polyketide chain elongation. The released polyketide undergoes cyclization to form an aromatic ring, and proceeds via serial modification steps to produce the heptaketide back- bone of elsinochrome. As elsinochrome has a symmetrical structure, two identical heptaketides are fused to form a core 1,2-dihydrobenzo-perylene ring structure, which can then be successively modified to produce the various derivatives of elsinochrome. Some of these reactions may be cooperatively carried out, at least in part, by the products of RDT1, OXR1 and PKS1. PRF1, embedded within the elsinochrome cluster possibly functions to stabilize some of the biosynthetic enzymes required for elsinochrome production. As prefoldin is a hexamer containing 2 a and 4 b subunits, additional prefoldin subunits, whose coding genes may not immediately link to the elsinochrome biosynthetic gene cluster, are required to fulfill the chaperone function. In addition, no methyltransferase-coding gene exists within the biosynthetic gene cluster, even though elsinochrome has four methyl groups at positions C3, C7, C8 and C12. Apparently, the identified gene cluster does not contain the entire entourage of genes responsible for elsinochrome biosynthesis. Once elsinochrome is synthesized, it must be exported outside the fungal cells, which is probably accomplished by the ECT1 transporter, to avoid toxicity. The sequence is that of Oxidoreductase 1 from Elsinoe fawcettii (Citrus scab fungus).